The following is a 167-amino-acid chain: Small ribosomal subunit protein uS5 (167 aa).

The 64-residue stretch at 12 to 75 (LEERVVTINR…EDAKKNMVLV (64 aa)) folds into the S5 DRBM domain.

Belongs to the universal ribosomal protein uS5 family. Part of the 30S ribosomal subunit. Contacts proteins S4 and S8.

Its function is as follows. With S4 and S12 plays an important role in translational accuracy. Located at the back of the 30S subunit body where it stabilizes the conformation of the head with respect to the body. The polypeptide is Small ribosomal subunit protein uS5 (Listeria monocytogenes serotype 4b (strain F2365)).